The following is a 202-amino-acid chain: LexA repressor 2 (202 aa).

Residues 28-48 (LAEISEAFGFASRSVARKHIV) constitute a DNA-binding region (H-T-H motif). Active-site for autocatalytic cleavage activity residues include serine 123 and lysine 160.

Belongs to the peptidase S24 family. Homodimer.

It catalyses the reaction Hydrolysis of Ala-|-Gly bond in repressor LexA.. In terms of biological role, represses a number of genes involved in the response to DNA damage (SOS response), including recA and lexA. In the presence of single-stranded DNA, RecA interacts with LexA causing an autocatalytic cleavage which disrupts the DNA-binding part of LexA, leading to derepression of the SOS regulon and eventually DNA repair. The chain is LexA repressor 2 from Pseudomonas syringae pv. tomato (strain ATCC BAA-871 / DC3000).